The chain runs to 421 residues: Isocitrate dehydrogenase [NADP], mitochondrial (421 aa).

The transit peptide at 1–8 (ARAAARHY) directs the protein to the mitochondrion. 4 positions are modified to N6-acetyllysine: lysine 14, lysine 17, lysine 36, and lysine 38. 2 positions are modified to N6-acetyllysine; alternate: lysine 49 and lysine 75. N6-succinyllysine; alternate is present on residues lysine 49 and lysine 75. Residues 84 to 86 (TIT) and arginine 91 each bind NADP(+). Residue threonine 86 coordinates D-threo-isocitrate. Residues 103 to 109 (SPNGTIR) and arginine 118 contribute to the D-threo-isocitrate site. Residue lysine 124 is modified to N6-acetyllysine. Position 135 is an N6-acetyllysine; alternate (lysine 135). Lysine 135 carries the post-translational modification N6-succinyllysine; alternate. D-threo-isocitrate is bound at residue arginine 141. Lysine 149 and lysine 162 each carry N6-acetyllysine; alternate. N6-succinyllysine; alternate is present on residues lysine 149 and lysine 162. The residue at position 168 (lysine 168) is an N6-acetyllysine. Lysine 225 is subject to N6-acetyllysine; alternate. An N6-succinyllysine; alternate modification is found at lysine 225. An N6-acetyllysine mark is found at lysine 232, lysine 241, lysine 244, and lysine 249. Position 251 is an N6-acetyllysine; alternate (lysine 251). Lysine 251 is subject to N6-succinyllysine; alternate. Aspartate 260 serves as a coordination point for Mn(2+). Residue lysine 268 participates in NADP(+) binding. Aspartate 283 is a binding site for Mn(2+). NADP(+) contacts are provided by residues 318 to 323 (GTVTRH) and asparagine 336. Lysine 353 is modified (N6-acetyllysine; alternate). Lysine 353 carries the N6-succinyllysine; alternate modification. An N6-acetyllysine mark is found at lysine 369, lysine 382, and lysine 411.

The protein belongs to the isocitrate and isopropylmalate dehydrogenases family. In terms of assembly, homodimer. Mg(2+) is required as a cofactor. The cofactor is Mn(2+). Post-translationally, acetylation at Lys-382 dramatically reduces catalytic activity. Deacetylated by SIRT3.

It localises to the mitochondrion. It carries out the reaction D-threo-isocitrate + NADP(+) = 2-oxoglutarate + CO2 + NADPH. In terms of biological role, plays a role in intermediary metabolism and energy production. It may tightly associate or interact with the pyruvate dehydrogenase complex. The chain is Isocitrate dehydrogenase [NADP], mitochondrial (IDH2) from Sus scrofa (Pig).